An 875-amino-acid polypeptide reads, in one-letter code: DNA topoisomerase 3-beta (875 aa).

A Toprim domain is found at 3–153; sequence SVLMVAEKPS…QVTYRAHFSA (151 aa). Residues 170-589 enclose the Topo IA-type catalytic domain; it reads NENEAKSVDA…AIKIFKLKFM (420 aa). Tyr-332 functions as the O-(5'-phospho-DNA)-tyrosine intermediate in the catalytic mechanism. Positions 371 to 391 are disordered; sequence QTPRKGKDAGDHPPITPMKLG.

This sequence belongs to the type IA topoisomerase family.

The enzyme catalyses ATP-independent breakage of single-stranded DNA, followed by passage and rejoining.. Functionally, releases the supercoiling and torsional tension of DNA introduced during the DNA replication and transcription by transiently cleaving and rejoining one strand of the DNA duplex. Introduces a single-strand break via transesterification at a target site in duplex DNA. The scissile phosphodiester is attacked by the catalytic tyrosine of the enzyme, resulting in the formation of a DNA-(5'-phosphotyrosyl)-enzyme intermediate and the expulsion of a 3'-OH DNA strand. The free DNA strand than undergoes passage around the unbroken strand thus removing DNA supercoils. Finally, in the religation step, the DNA 3'-OH attacks the covalent intermediate to expel the active-site tyrosine and restore the DNA phosphodiester backbone. Weakly relaxes negative supercoils and displays a distinct preference for binding single-stranded DNA. The protein is DNA topoisomerase 3-beta (Top3beta) of Drosophila melanogaster (Fruit fly).